The primary structure comprises 765 residues: Polyadenylate-binding protein, cytoplasmic and nuclear (765 aa).

A compositionally biased stretch (low complexity) spans 1–37 (MSADASTTPAADSNVTSTPETSTTPAAPAPEVTAVES). Positions 1–49 (MSADASTTPAADSNVTSTPETSTTPAAPAPEVTAVESTTAPNASQPHSA) are disordered. The segment covering 38–48 (TTAPNASQPHS) has biased composition (polar residues). 4 consecutive RRM domains span residues 49–127 (ASLY…WSQR), 137–214 (GNVF…HHIS), 230–307 (TNVY…RAQK), and 333–470 (VNLY…LAQR). Disordered regions lie at residues 364–427 (VMRD…ADKK) and 619–657 (PGYGQGRGGVPVQQGQMRPGQGGRGQNAAQAPAGRPEEA). The segment covering 377 to 427 (ESDKEKENKEATKENEKESSEAEKAEKTEEKPADSGDEKKEDKESKKADKK) has biased composition (basic and acidic residues). The segment covering 628–637 (VPVQQGQMRP) has biased composition (low complexity). The region spanning 659–736 (AGGLTAQALS…ALNVYDEYMK (78 aa)) is the PABC domain. Residues 737–765 (NKGGESEATGEAAKPKEAAKETSTEENKS) are disordered. The segment covering 749–765 (AKPKEAAKETSTEENKS) has biased composition (basic and acidic residues).

It belongs to the polyadenylate-binding protein type-1 family.

The protein localises to the cytoplasm. It localises to the nucleus. In terms of biological role, binds the poly(A) tail of mRNA. Appears to be an important mediator of the multiple roles of the poly(A) tail in mRNA biogenesis, stability and translation. In the nucleus, involved in both mRNA cleavage and polyadenylation. Is also required for efficient mRNA export to the cytoplasm. Acts in concert with a poly(A)-specific nuclease (PAN) to affect poly(A) tail shortening, which may occur concomitantly with either nucleocytoplasmic mRNA transport or translational initiation. In the cytoplasm, stimulates translation initiation and regulates mRNA decay through translation termination-coupled poly(A) shortening, probably mediated by PAN. In Aspergillus oryzae (strain ATCC 42149 / RIB 40) (Yellow koji mold), this protein is Polyadenylate-binding protein, cytoplasmic and nuclear (pab1).